A 383-amino-acid polypeptide reads, in one-letter code: uncharacterized protein (383 aa).

A run of 2 helical transmembrane segments spans residues 49 to 69 and 347 to 367; these read VDLL…GCVA and LLGG…PVAG.

The protein to M.tuberculosis Rv0874c.

It is found in the cell membrane. This is an uncharacterized protein from Mycobacterium tuberculosis (strain CDC 1551 / Oshkosh).